Reading from the N-terminus, the 3341-residue chain is Genome polyprotein (3341 aa).

Basic and acidic residues-rich tracts occupy residues 1 to 14 and 24 to 35; these read MKRK…KAPG and REGRRKDKDKGG. Residues 1 to 57 are disordered; that stretch reads MKRKDLEARGKAPGRDSSTPFWGREGRRKDKDKGGESPSNRQVTLKTPIQSGRRAGK. The Cytoplasmic segment spans residues 1–120; sequence MKRKDLEARG…LESRRTTGNP (120 aa). The span at 37–50 shows a compositional bias: polar residues; that stretch reads SPSNRQVTLKTPIQ. The hydrophobic; homodimerization of capsid protein C stretch occupies residues 55 to 97; that stretch reads AGKRQRVGLLGRLGVGWGSFLQEDIVQALIHMALVLHALFASI. Residues 117 to 136 constitute a propeptide, ER anchor for the capsid protein C, removed in mature form by serine protease NS3; the sequence is TGNPMTLAFILGFLTVLCGC. The chain crosses the membrane as a helical span at residues 121 to 141; the sequence is MTLAFILGFLTVLCGCVVIDM. The Extracellular segment spans residues 142-245; it reads QVSTTRGTEI…AFKTIRENKT (104 aa). N-linked (GlcNAc...) asparagine; by host glycosylation is found at Asn157 and Asn243. The helical transmembrane segment at 246–262 threads the bilayer; it reads IFIVALLCVAIAKRWPT. Residue Trp263 is a topological domain, cytoplasmic. A helical membrane pass occupies residues 264 to 278; the sequence is VVILLAIGTWTTVKG. Topologically, residues 279 to 665 are extracellular; that stretch reads EFVEPLYTLK…GVWQDLVGKF (387 aa). N-linked (GlcNAc...) asparagine; by host glycosylation occurs at Asn339. Residues 371–384 form an involved in fusion region; the sequence is NRGWGTGCFKWGIG. 4 N-linked (GlcNAc...) asparagine; by host glycosylation sites follow: Asn399, Asn411, Asn575, and Asn611. Residues 666–686 form a helical membrane-spanning segment; it reads SVGAFFSNTALLVILVLAALI. Residues 687 to 689 are Cytoplasmic-facing; it reads DKR. The chain crosses the membrane as a helical span at residues 690–705; the sequence is IAFLLVLGGYFYYVRA. The Extracellular portion of the chain corresponds to 706–1138; it reads DLGCGIDTTR…AKTRTSTLTR (433 aa). N-linked (GlcNAc...) asparagine; by host glycans are attached at residues Asn794, Asn896, Asn993, and Asn1027. A helical membrane pass occupies residues 1139-1159; the sequence is LFLTILAMALFGLPNLFSSVG. Residues 1160-1178 lie on the Cytoplasmic side of the membrane; that stretch reads LSAWVLLVASSSAQPQDLS. Residues 1179 to 1199 form a helical membrane-spanning segment; it reads MNLWIVLQTGSSAVLLLGYMI. Residues 1200 to 1204 lie on the Lumenal side of the membrane; it reads RRKLA. The helical transmembrane segment at 1205-1225 threads the bilayer; the sequence is MVLGVHHLVTLMCVQFLFSAV. Residues 1226-1231 lie on the Cytoplasmic side of the membrane; it reads DRYQKY. Residues 1232-1252 form a helical membrane-spanning segment; that stretch reads LYGLLELMASVVLLSAYKSVL. Residues 1253-1261 are Lumenal-facing; that stretch reads QALPPEVLC. Residues 1262–1282 form a helical membrane-spanning segment; sequence FSLVMGWKTALSLATVVFLIF. The Cytoplasmic portion of the chain corresponds to 1283–1303; sequence SLNAMYKYACQYHNPRNGYRD. A helical membrane pass occupies residues 1304–1324; it reads SGANLWFWTVSLASAGGIWAA. At 1325–1326 the chain is on the lumenal side; the sequence is EK. A helical transmembrane segment spans residues 1327–1347; the sequence is AHQPTVAAVLAFTMVVLFLYM. Residues 1348–1403 are Cytoplasmic-facing; the sequence is EQTNVSMELEFISAGETPEGVSTENDDGINIPDLKGRYGEDGIVVGAASSSGYLPE. Positions 1404–1424 form an intramembrane region, helical; that stretch reads LVFVFLLGFAVTSTSYFLGAL. The Cytoplasmic portion of the chain corresponds to 1425–2089; sequence YLLIATSTNL…TERSLTVVMA (665 aa). The Peptidase S7 domain occupies 1452–1630; the sequence is SDDLLGLGGP…KPTDVTESLN (179 aa). Active-site charge relay system; for serine protease NS3 activity residues include His1506, Asp1530, and Ser1589. Residues 1627 to 1780 enclose the Helicase ATP-binding domain; the sequence is ESLNCDSTRR…SNYAISDQSI (154 aa). 1640 to 1647 serves as a coordination point for ATP; sequence WHPGKGKT. A DECH box motif is present at residues 1729–1732; that stretch reads DECH. The Helicase C-terminal domain maps to 1793–1947; sequence NVQKSVGAKK…TFMLEEAAYS (155 aa). A helical transmembrane segment spans residues 2090–2110; the sequence is FVLGVSIMLSCFIAVWALCFL. Over 2111 to 2145 the chain is Lumenal; it reads FSLFRPKKATYEQMPSSDPLSGGVLVSTPSVLYCM. A helical membrane pass occupies residues 2146-2166; that stretch reads GVPLGFCVVITLAMFLVYPVL. Topologically, residues 2167 to 2178 are cytoplasmic; the sequence is YKSIGNRSYMDS. The chain crosses the membrane as a helical span at residues 2179–2199; it reads DLVKWVILGSCLICGVLAWEM. Residues 2200-2242 lie on the Lumenal side of the membrane; sequence RMFPNIRSDLMELVKAVKEPEEVVNSGPSFPSWEIAQGKGATM. Residues 2243–2263 form a helical membrane-spanning segment; sequence LDSLQVFFFITVLSTKFLYWF. Residues 2264–2302 are Cytoplasmic-facing; it reads QENWTARMYAMKHPEMVSSIGGFRFDEIPFRAVLPSGFA. Residues 2303-2323 constitute an intramembrane region (helical); it reads IVAIASLPSVVVGLLAAGVFM. Over 2324–2366 the chain is Cytoplasmic; sequence AIMYCQNKWNATPKILTALDARDQRHDRPTEITSRVPLENTRS. The helical transmembrane segment at 2367 to 2387 threads the bilayer; the sequence is IMYAFCLIFSLFWAFCTRSPG. Residues 2388 to 2412 are Lumenal-facing; sequence DFLRGSLVVGASMWQILHPRSKIHD. The helical transmembrane segment at 2413–2433 threads the bilayer; sequence VMDFGSMVSAIGLLEMNYLFY. Residues 2434 to 3341 lie on the Cytoplasmic side of the membrane; that stretch reads RFMHIAARAL…SRYRRGNDVI (908 aa). Positions 2454–2706 constitute an mRNA cap 0-1 NS5-type MT domain; that stretch reads ALEKSTTIGL…SPVLPKGTRA (253 aa). Ser2497 contributes to the S-adenosyl-L-methionine binding site. The active-site For 2'-O-MTase activity is the Lys2509. The S-adenosyl-L-methionine site is built by Gly2527, Trp2528, Thr2545, Ile2546, Asp2572, and Val2573. Asp2587 functions as the For 2'-O-MTase activity in the catalytic mechanism. Ile2588 contributes to the S-adenosyl-L-methionine binding site. Active-site for 2'-O-MTase activity residues include Lys2624 and Glu2660. Tyr2662 lines the S-adenosyl-L-methionine pocket. Positions 2881, 2885, 2890, and 2893 each coordinate Zn(2+). The 148-residue stretch at 2970 to 3117 folds into the RdRp catalytic domain; it reads KYLIADDIAG…STDNRDFSSA (148 aa). The Zn(2+) site is built by His3152, Cys3168, and Cys3287.

The protein in the N-terminal section; belongs to the class I-like SAM-binding methyltransferase superfamily. mRNA cap 0-1 NS5-type methyltransferase family. As to quaternary structure, homodimer. Forms heterodimers with envelope protein E in the endoplasmic reticulum and Golgi. In terms of assembly, homodimer; in the endoplasmic reticulum and Golgi. As to quaternary structure, forms homodimers as well as homohexamers. NS1 may interact with NS4A. Forms a heterodimer with serine protease NS3. May form homooligomers. In terms of assembly, forms a heterodimer with NS2B. Interacts with NS4B. Interacts with unphosphorylated RNA-directed RNA polymerase NS5; this interaction stimulates RNA-directed RNA polymerase NS5 guanylyltransferase activity. As to quaternary structure, interacts with serine protease NS3. Interacts with host STAT2; this interaction inhibits the phosphorylation of the latter, and, when all viral proteins are present (polyprotein), targets STAT2 for degradation. In terms of processing, genome polyprotein: Specific enzymatic cleavages in vivo yield mature proteins. Cleavages in the lumen of endoplasmic reticulum are performed by host signal peptidase, whereas cleavages in the cytoplasmic side are performed by serine protease NS3. Signal cleavage at the 2K-4B site requires a prior NS3 protease-mediated cleavage at the 4A-2K site. Cleaved in post-Golgi vesicles by a host furin, releasing the mature small envelope protein M, and peptide pr. This cleavage is incomplete as up to 30% of viral particles still carry uncleaved prM. Post-translationally, N-glycosylated. In terms of processing, N-glycosylated. The excreted form is glycosylated and this is required for efficient secretion of the protein from infected cells. Phosphorylated on serines residues. This phosphorylation may trigger NS5 nuclear localization.

It localises to the virion. The protein localises to the host nucleus. It is found in the secreted. The protein resides in the virion membrane. Its subcellular location is the host endoplasmic reticulum membrane. The enzyme catalyses Selective hydrolysis of -Xaa-Xaa-|-Yaa- bonds in which each of the Xaa can be either Arg or Lys and Yaa can be either Ser or Ala.. The catalysed reaction is RNA(n) + a ribonucleoside 5'-triphosphate = RNA(n+1) + diphosphate. It catalyses the reaction a ribonucleoside 5'-triphosphate + H2O = a ribonucleoside 5'-diphosphate + phosphate + H(+). It carries out the reaction ATP + H2O = ADP + phosphate + H(+). The enzyme catalyses a 5'-end (5'-triphosphoguanosine)-ribonucleoside in mRNA + S-adenosyl-L-methionine = a 5'-end (N(7)-methyl 5'-triphosphoguanosine)-ribonucleoside in mRNA + S-adenosyl-L-homocysteine. The catalysed reaction is a 5'-end (N(7)-methyl 5'-triphosphoguanosine)-ribonucleoside in mRNA + S-adenosyl-L-methionine = a 5'-end (N(7)-methyl 5'-triphosphoguanosine)-(2'-O-methyl-ribonucleoside) in mRNA + S-adenosyl-L-homocysteine + H(+). Its function is as follows. Plays a role in virus budding by binding to the cell membrane and gathering the viral RNA into a nucleocapsid that forms the core of a mature virus particle. During virus entry, may induce genome penetration into the host cytoplasm after hemifusion induced by the surface proteins. Can migrate to the cell nucleus where it modulates host functions. Prevents premature fusion activity of envelope proteins in trans-Golgi by binding to envelope protein E at pH6.0. After virion release in extracellular space, gets dissociated from E dimers. In terms of biological role, acts as a chaperone for envelope protein E during intracellular virion assembly by masking and inactivating envelope protein E fusion peptide. prM is the only viral peptide matured by host furin in the trans-Golgi network probably to avoid catastrophic activation of the viral fusion activity in acidic Golgi compartment prior to virion release. prM-E cleavage is inefficient, and many virions are only partially matured. These uncleaved prM would play a role in immune evasion. Functionally, may play a role in virus budding. Exerts cytotoxic effects by activating a mitochondrial apoptotic pathway through M ectodomain. May display a viroporin activity. Its function is as follows. Binds to host cell surface receptor and mediates fusion between viral and cellular membranes. Envelope protein is synthesized in the endoplasmic reticulum in the form of heterodimer with protein prM. They play a role in virion budding in the ER, and the newly formed immature particle is covered with 60 spikes composed of heterodimer between precursor prM and envelope protein E. The virion is transported to the Golgi apparatus where the low pH causes dissociation of PrM-E heterodimers and formation of E homodimers. prM-E cleavage is inefficient, and many virions are only partially matured. These uncleaved prM would play a role in immune evasion. Involved in immune evasion, pathogenesis and viral replication. Once cleaved off the polyprotein, is targeted to three destinations: the viral replication cycle, the plasma membrane and the extracellular compartment. May play a role in viral genome replication. Assist membrane bending and envelopment of genomic RNA at the endoplasmic reticulum. Excreted as a hexameric lipoparticle that plays a role against host immune response. In terms of biological role, component of the viral RNA replication complex that functions in virion assembly and antagonizes the host immune response. Functionally, required cofactor for the serine protease function of NS3. May have membrane-destabilizing activity and form viroporins. Its function is as follows. Displays three enzymatic activities: serine protease, NTPase and RNA helicase. NS3 serine protease, in association with NS2B, performs its autocleavage and cleaves the polyprotein at dibasic sites in the cytoplasm: C-prM, NS2A-NS2B, NS2B-NS3, NS3-NS4A, NS4A-2K and NS4B-NS5. NS3 RNA helicase binds RNA and unwinds dsRNA in the 3' to 5' direction. Regulates the ATPase activity of the NS3 helicase activity. NS4A allows NS3 helicase to conserve energy during unwinding. In terms of biological role, functions as a signal peptide for NS4B and is required for the interferon antagonism activity of the latter. Functionally, inhibits interferon (IFN)-induced host STAT1 phosphorylation and nuclear translocation, thereby preventing the establishment of a cellular antiviral state by blocking the IFN-alpha/beta pathway. Its function is as follows. Replicates the viral (+) and (-) RNA genome, and performs the capping of genomes in the cytoplasm. NS5 methylates viral RNA cap at guanine N-7 and ribose 2'-O positions. Besides its role in RNA genome replication, also prevents the establishment of cellular antiviral state by blocking the interferon-alpha/beta (IFN-alpha/beta) signaling pathway. Inhibits host TYK2 and STAT2 phosphorylation, thereby preventing activation of JAK-STAT signaling pathway. In Aedes (CFA flavivirus), this protein is Genome polyprotein.